Reading from the N-terminus, the 157-residue chain is Small ribosomal subunit protein uS7 (157 aa).

Belongs to the universal ribosomal protein uS7 family. As to quaternary structure, part of the 30S ribosomal subunit. Contacts proteins S9 and S11.

In terms of biological role, one of the primary rRNA binding proteins, it binds directly to 16S rRNA where it nucleates assembly of the head domain of the 30S subunit. Is located at the subunit interface close to the decoding center, probably blocks exit of the E-site tRNA. This chain is Small ribosomal subunit protein uS7, found in Caldicellulosiruptor saccharolyticus (strain ATCC 43494 / DSM 8903 / Tp8T 6331).